A 670-amino-acid chain; its full sequence is DNA ligase (670 aa).

NAD(+) contacts are provided by residues 32–36, 81–82, and Glu114; these read DSEYD and SL. Lys116 functions as the N6-AMP-lysine intermediate in the catalytic mechanism. 4 residues coordinate NAD(+): Arg137, Glu174, Lys291, and Lys315. Residues Cys409, Cys412, Cys427, and Cys433 each contribute to the Zn(2+) site. Residues 592–670 form the BRCT domain; the sequence is ASENLFKDKT…EEEFLAQITR (79 aa).

It belongs to the NAD-dependent DNA ligase family. LigA subfamily. Mg(2+) serves as cofactor. Mn(2+) is required as a cofactor.

The catalysed reaction is NAD(+) + (deoxyribonucleotide)n-3'-hydroxyl + 5'-phospho-(deoxyribonucleotide)m = (deoxyribonucleotide)n+m + AMP + beta-nicotinamide D-nucleotide.. Its function is as follows. DNA ligase that catalyzes the formation of phosphodiester linkages between 5'-phosphoryl and 3'-hydroxyl groups in double-stranded DNA using NAD as a coenzyme and as the energy source for the reaction. It is essential for DNA replication and repair of damaged DNA. The polypeptide is DNA ligase (Haemophilus influenzae (strain ATCC 51907 / DSM 11121 / KW20 / Rd)).